The following is a 155-amino-acid chain: Ribosomal RNA large subunit methyltransferase H (155 aa).

Residues Leu-72, Gly-104, and 123-128 (LSKMTF) contribute to the S-adenosyl-L-methionine site.

This sequence belongs to the RNA methyltransferase RlmH family. In terms of assembly, homodimer.

It is found in the cytoplasm. It catalyses the reaction pseudouridine(1915) in 23S rRNA + S-adenosyl-L-methionine = N(3)-methylpseudouridine(1915) in 23S rRNA + S-adenosyl-L-homocysteine + H(+). Functionally, specifically methylates the pseudouridine at position 1915 (m3Psi1915) in 23S rRNA. The chain is Ribosomal RNA large subunit methyltransferase H from Cytophaga hutchinsonii (strain ATCC 33406 / DSM 1761 / CIP 103989 / NBRC 15051 / NCIMB 9469 / D465).